Consider the following 351-residue polypeptide: MYSLFRPLLFTCDTERAHDISLCTLDIAYHSGALPLLTRHPRPLPTTAFGLNFPNPVGLAAGLDKNGTHIDALFALGFGFIEIGTTTPRPQPGNPKPRLFRLTQQQAVINRMGFNNLGVDALVRNVAGARQRNGPLGINIGKNKDTPNEQASNDYRYCLERVYALADYVTINLSSPNTAGLRALQEEQTLRRLIGELREAQETLAAKHGRHVPMLIKMAPDLSDSDIDAAARVLNEMSVDGVIATNTTVTRPLLRQHRLASETGGLSGAPLLGQSTLVLRRLRTHLPETIALIGVGGICCGADAVAKMAAGANLVQCYTGLIFKGPQLVGECVEAIRRRREASSSGRASTQ.

Residues 61 to 65 (AGLDK) and Thr-85 each bind FMN. Lys-65 is a binding site for substrate. 110–114 (NRMGF) contributes to the substrate binding site. FMN-binding residues include Asn-139 and Asn-172. Asn-172 is a substrate binding site. Ser-175 serves as the catalytic Nucleophile. Asn-177 lines the substrate pocket. Positions 217 and 245 each coordinate FMN. 246-247 (NT) contributes to the substrate binding site. FMN contacts are provided by residues Gly-268, Gly-297, and 318–319 (YT).

Belongs to the dihydroorotate dehydrogenase family. Type 2 subfamily. As to quaternary structure, monomer. It depends on FMN as a cofactor.

Its subcellular location is the cell membrane. The catalysed reaction is (S)-dihydroorotate + a quinone = orotate + a quinol. Its pathway is pyrimidine metabolism; UMP biosynthesis via de novo pathway; orotate from (S)-dihydroorotate (quinone route): step 1/1. In terms of biological role, catalyzes the conversion of dihydroorotate to orotate with quinone as electron acceptor. The protein is Dihydroorotate dehydrogenase (quinone) of Xylella fastidiosa (strain 9a5c).